Reading from the N-terminus, the 422-residue chain is MLFMLRWTTAGESHGQALISMIENLPAGLSVSREDVSYQLARRRLGYGRGARMKFEADEVTFVGGVRHGKTLGSPVAVMIGNTEWPKWTTIMSADPIDESDPEVAKEMASGRGAKLTRPRPGHADFSGMVKYDHDEARPILERSSARETAARVAAGTFARALLREVLGVEVLSHVISIGRSEPYEGPSPEFSDLEGIDASPVRAFDSAVEESMIDEIKAAKKSGDTLGGIVEVVVKGLPIGLGSHVSGDERLDAQLAAALMGIQAIKGVEIGDGFEEARRRGSEAHDEMEAAANGGVHRLSNRAGGLEGGMTNGEELRVRAAMKPISTVPRALKTVDMATGEAATGIHQRSDVCAVPAAGVVAETMVALVLARAVLKKFGGDSVEETKRNVQSYLEYVDTRLDWSAEANDVADGEVADGEIR.

NADP(+)-binding residues include arginine 43 and arginine 49. FMN contacts are provided by residues 143–145, 264–265, glycine 309, 324–328, and arginine 350; these read RSS, QA, and KPIST.

The protein belongs to the chorismate synthase family. As to quaternary structure, homotetramer. FMNH2 is required as a cofactor.

It catalyses the reaction 5-O-(1-carboxyvinyl)-3-phosphoshikimate = chorismate + phosphate. The protein operates within metabolic intermediate biosynthesis; chorismate biosynthesis; chorismate from D-erythrose 4-phosphate and phosphoenolpyruvate: step 7/7. Catalyzes the anti-1,4-elimination of the C-3 phosphate and the C-6 proR hydrogen from 5-enolpyruvylshikimate-3-phosphate (EPSP) to yield chorismate, which is the branch point compound that serves as the starting substrate for the three terminal pathways of aromatic amino acid biosynthesis. This reaction introduces a second double bond into the aromatic ring system. This is Chorismate synthase from Corynebacterium jeikeium (strain K411).